A 320-amino-acid chain; its full sequence is NAD kinase (320 aa).

The active-site Proton acceptor is Asp-96. Residues 96–97 (DG), Arg-101, 170–171 (NE), Asp-200, and 211–216 (TAYAFS) contribute to the NAD(+) site.

The protein belongs to the NAD kinase family. It depends on a divalent metal cation as a cofactor.

The protein resides in the cytoplasm. The catalysed reaction is NAD(+) + ATP = ADP + NADP(+) + H(+). Involved in the regulation of the intracellular balance of NAD and NADP, and is a key enzyme in the biosynthesis of NADP. Catalyzes specifically the phosphorylation on 2'-hydroxyl of the adenosine moiety of NAD to yield NADP. This chain is NAD kinase, found in Rhodococcus jostii (strain RHA1).